The sequence spans 64 residues: Large ribosomal subunit protein bL35 (64 aa).

Positions 1–10 (MPKMKTNSAA) are enriched in polar residues. The interval 1 to 64 (MPKMKTNSAA…AKKLHQLLQK (64 aa)) is disordered. Positions 54 to 64 (QAKKLHQLLQK) are enriched in basic residues.

It belongs to the bacterial ribosomal protein bL35 family.

The sequence is that of Large ribosomal subunit protein bL35 from Bifidobacterium longum (strain NCC 2705).